Here is a 706-residue protein sequence, read N- to C-terminus: Termination factor NPH-I homolog (706 aa).

The 166-residue stretch at 62–227 (IGQGENTRGL…VPCFNMLSGR (166 aa)) folds into the Helicase ATP-binding domain. 75 to 82 (HQMGMGKT) contacts ATP. A DEAH box motif is present at residues 168–171 (DEAH). The Helicase C-terminal domain occupies 417 to 599 (QCLQPLKVLE…HLNSAFRDLL (183 aa)).

The protein belongs to the DEAD box helicase family. DEAH subfamily. In terms of assembly, part of the viral DNA-directed RNA polymerase that consists of 8 polII-like subunits (RPB1, RPB2, RPB3, RPB5, RPB6, RPB7, RPB9, RPB10), a capping enzyme and a termination factor.

It localises to the virion. In terms of biological role, putative DNA-dependent ATPase required for providing the needed energy to achieve the termination of early transcripts. This is Termination factor NPH-I homolog from African swine fever virus (isolate Warthog/Namibia/Wart80/1980) (ASFV).